The following is a 418-amino-acid chain: Putative L-glutamine:3-amino-2,3-dideoxy-scyllo-inosose aminotransferase (418 aa).

Lys199 is modified (N6-(pyridoxal phosphate)lysine).

It belongs to the DegT/DnrJ/EryC1 family. L-glutamine:2-deoxy-scyllo-inosose/scyllo-inosose aminotransferase subfamily. Pyridoxal 5'-phosphate serves as cofactor.

It catalyses the reaction 3-amino-2,3-dideoxy-scyllo-inosose + L-glutamine = 2-deoxystreptamine + 2-oxoglutaramate. It functions in the pathway metabolic intermediate biosynthesis; 2-deoxystreptamine biosynthesis; 2-deoxystreptamine from D-glucose 6-phosphate: step 4/4. The protein operates within antibiotic biosynthesis; gentamicin biosynthesis. Catalyzes the transamination of 3-amino-2,3-dideoxy-scyllo-inosose (amino-DOI) into 2-deoxystreptamine (DOS). This is Putative L-glutamine:3-amino-2,3-dideoxy-scyllo-inosose aminotransferase (gtmD) from Micromonospora echinospora (Micromonospora purpurea).